The sequence spans 525 residues: NGFI-A-binding protein 2 (525 aa).

Residues 1–31 form a disordered region; the sequence is MHRAPSPTAEQPPGRGDNTRRTPQPRFKASA. Serine 6 carries the phosphoserine modification. The tract at residues 35–113 is NCD1; it reads ALPRTLGELQ…REWATNPGLF (79 aa). Residues 135–238 are disordered; that stretch reads GTRKGSMSNG…GAGGGPDRLE (104 aa). Phosphoserine is present on residues serine 157, serine 159, serine 162, and serine 171. The segment covering 212 to 234 has biased composition (gly residues); sequence AGGGVSEGPGVGGVAAGGAGGGP. The NCD2 stretch occupies residues 267-356; that stretch reads LLKLNKKLAR…SRQVARESTY (90 aa). The interval 353–384 is necessary for nuclear localization; it reads ESTYLSSLKGSRLHSEELGGPPLKKLKQEVGE. Residue lysine 379 forms a Glycyl lysine isopeptide (Lys-Gly) (interchain with G-Cter in SUMO1) linkage. The tract at residues 381-416 is disordered; that stretch reads EVGEQSHNEIQQPPPGPESYAPPYRPSLEEDSASLS. A Phosphoserine modification is found at serine 479. The tract at residues 501–525 is disordered; the sequence is APGPHPALVEGRRSSVKVEAEASRQ. Residues 510–525 are compositionally biased toward basic and acidic residues; sequence EGRRSSVKVEAEASRQ. A Glycyl lysine isopeptide (Lys-Gly) (interchain with G-Cter in SUMO1); alternate cross-link involves residue lysine 517. Lysine 517 participates in a covalent cross-link: Glycyl lysine isopeptide (Lys-Gly) (interchain with G-Cter in SUMO2); alternate.

It belongs to the NAB family. Homomultimers may associate with EGR1 bound to DNA. In terms of processing, sumoylation by EGR2 represses EGR2 transcriptional activity in hindbrain. In terms of tissue distribution, highly expressed in brain and thymus, and at lower levels in spleen, kidney, heart and testis. Isoform 1 is predominantly expressed in testis, whereas isoform 3 is more abundant in thymus.

The protein resides in the nucleus. Its function is as follows. Acts as a transcriptional repressor for zinc finger transcription factors EGR1 and EGR2. Isoform 2 lacks repression ability. This is NGFI-A-binding protein 2 (Nab2) from Mus musculus (Mouse).